The following is a 163-amino-acid chain: MKKTMMAAALVLSALSIQSALAAEYSEKTQYLGVVNGQVVGNSVVKVTRTPTDPVLYRSGSNSPLPAELIIRHAESRPASGGLANITVKEALPDNGEARITLKTSLMVDGKRVALSARQQGEDVVITVPEAQQQIELRTDAPAELEVPVSYRGNLQIALQVED.

The signal sequence occupies residues 1-22 (MKKTMMAAALVLSALSIQSALA).

It localises to the fimbrium. K88 minor fimbrial subunit, plays an essential role in the biogenesis of the K88 fimbriae. required at some step in the initiation and/or elongation of the K88 fimbriae. This Escherichia coli protein is K88 minor fimbrial subunit FaeF (faeF).